A 191-amino-acid chain; its full sequence is Leucyl/phenylalanyl-tRNA--protein transferase (191 aa).

Belongs to the L/F-transferase family.

It localises to the cytoplasm. It catalyses the reaction N-terminal L-lysyl-[protein] + L-leucyl-tRNA(Leu) = N-terminal L-leucyl-L-lysyl-[protein] + tRNA(Leu) + H(+). The enzyme catalyses N-terminal L-arginyl-[protein] + L-leucyl-tRNA(Leu) = N-terminal L-leucyl-L-arginyl-[protein] + tRNA(Leu) + H(+). It carries out the reaction L-phenylalanyl-tRNA(Phe) + an N-terminal L-alpha-aminoacyl-[protein] = an N-terminal L-phenylalanyl-L-alpha-aminoacyl-[protein] + tRNA(Phe). Its function is as follows. Functions in the N-end rule pathway of protein degradation where it conjugates Leu, Phe and, less efficiently, Met from aminoacyl-tRNAs to the N-termini of proteins containing an N-terminal arginine or lysine. This is Leucyl/phenylalanyl-tRNA--protein transferase from Gloeothece citriformis (strain PCC 7424) (Cyanothece sp. (strain PCC 7424)).